Here is a 474-residue protein sequence, read N- to C-terminus: tRNA-2-methylthio-N(6)-dimethylallyladenosine synthase (474 aa).

The region spanning 3–120 (KKLHIKTWGC…LPDMIEQVRR (118 aa)) is the MTTase N-terminal domain. The [4Fe-4S] cluster site is built by C12, C49, C83, C157, C161, and C164. The Radical SAM core domain occupies 143 to 375 (RAEGPTAFVS…QDRITQQAMR (233 aa)). Residues 378-441 (RHMMGTVQRI…TNSLRGKFIR (64 aa)) enclose the TRAM domain.

Belongs to the methylthiotransferase family. MiaB subfamily. As to quaternary structure, monomer. It depends on [4Fe-4S] cluster as a cofactor.

The protein resides in the cytoplasm. The enzyme catalyses N(6)-dimethylallyladenosine(37) in tRNA + (sulfur carrier)-SH + AH2 + 2 S-adenosyl-L-methionine = 2-methylsulfanyl-N(6)-dimethylallyladenosine(37) in tRNA + (sulfur carrier)-H + 5'-deoxyadenosine + L-methionine + A + S-adenosyl-L-homocysteine + 2 H(+). Catalyzes the methylthiolation of N6-(dimethylallyl)adenosine (i(6)A), leading to the formation of 2-methylthio-N6-(dimethylallyl)adenosine (ms(2)i(6)A) at position 37 in tRNAs that read codons beginning with uridine. The protein is tRNA-2-methylthio-N(6)-dimethylallyladenosine synthase of Shewanella putrefaciens (strain CN-32 / ATCC BAA-453).